Consider the following 385-residue polypeptide: GDSL esterase/lipase At5g08460 (385 aa).

A signal peptide spans 1-35 (MHDSEIFKFKDMMMMSCTVQTLVLVPWFLVVFVLA). The active-site Nucleophile is S56. N-linked (GlcNAc...) asparagine glycosylation is found at N218 and N285. Active-site residues include D350 and H353. N368 and N378 each carry an N-linked (GlcNAc...) asparagine glycan.

Belongs to the 'GDSL' lipolytic enzyme family.

Its subcellular location is the secreted. The polypeptide is GDSL esterase/lipase At5g08460 (Arabidopsis thaliana (Mouse-ear cress)).